The following is a 20-amino-acid chain: Brevinin-1ITb (20 aa).

Position 8 is a methionine sulfoxide; partial (M8). Residues C14 and C20 are joined by a disulfide bond.

Belongs to the frog skin active peptide (FSAP) family. Brevinin subfamily. Expressed by the skin glands.

Its subcellular location is the secreted. Antimicrobial peptide. The sequence is that of Brevinin-1ITb from Rana italica (Italian stream frog).